The chain runs to 233 residues: Coproporphyrinogen-III oxidase 2, chloroplastic (233 aa).

The transit peptide at 1-48 (MASHSSTLFTSPSSFILFSSHRLKSSPNYFTYHFPRSVKRPHFDLRCS) directs the protein to the chloroplast. Ser174 serves as a coordination point for substrate. The active-site Proton donor is His188.

It belongs to the aerobic coproporphyrinogen-III oxidase family. Homodimer.

Its subcellular location is the plastid. The protein localises to the chloroplast. It catalyses the reaction coproporphyrinogen III + O2 + 2 H(+) = protoporphyrinogen IX + 2 CO2 + 2 H2O. Its pathway is porphyrin-containing compound metabolism; protoporphyrin-IX biosynthesis; protoporphyrinogen-IX from coproporphyrinogen-III (O2 route): step 1/1. It functions in the pathway porphyrin-containing compound metabolism; chlorophyll biosynthesis. Key enzyme in heme biosynthesis. Catalyzes the oxidative decarboxylation of propionic acid side chains of rings A and B of coproporphyrinogen III. The polypeptide is Coproporphyrinogen-III oxidase 2, chloroplastic (CPX2) (Arabidopsis thaliana (Mouse-ear cress)).